Reading from the N-terminus, the 262-residue chain is Hydroxyethylthiazole kinase (262 aa).

Met50 provides a ligand contact to substrate. ATP is bound by residues Arg125 and Thr171. Residue Gly198 participates in substrate binding.

Belongs to the Thz kinase family. The cofactor is Mg(2+).

It carries out the reaction 5-(2-hydroxyethyl)-4-methylthiazole + ATP = 4-methyl-5-(2-phosphooxyethyl)-thiazole + ADP + H(+). Its pathway is cofactor biosynthesis; thiamine diphosphate biosynthesis; 4-methyl-5-(2-phosphoethyl)-thiazole from 5-(2-hydroxyethyl)-4-methylthiazole: step 1/1. Functionally, catalyzes the phosphorylation of the hydroxyl group of 4-methyl-5-beta-hydroxyethylthiazole (THZ). This Escherichia coli O45:K1 (strain S88 / ExPEC) protein is Hydroxyethylthiazole kinase.